The chain runs to 460 residues: Indoleacetamide hydrolase (460 aa).

Active-site charge relay system residues include Lys-71 and Ser-146. Ser-169 (acyl-ester intermediate) is an active-site residue.

It belongs to the amidase family.

It participates in plant hormone metabolism; auxin biosynthesis. Hydrolyzes indole-3-acetamide (IAM) into indole-3-acetic acid (IAA). The sequence is that of Indoleacetamide hydrolase (iaaH) from Pantoea agglomerans pv. gypsophilae (Erwinia herbicola).